Here is a 244-residue protein sequence, read N- to C-terminus: Phosphoadenosine 5'-phosphosulfate reductase (244 aa).

Cys-239 acts as the Nucleophile; cysteine thiosulfonate intermediate in catalysis.

This sequence belongs to the PAPS reductase family. CysH subfamily.

It is found in the cytoplasm. The catalysed reaction is [thioredoxin]-disulfide + sulfite + adenosine 3',5'-bisphosphate + 2 H(+) = [thioredoxin]-dithiol + 3'-phosphoadenylyl sulfate. It participates in sulfur metabolism; hydrogen sulfide biosynthesis; sulfite from sulfate: step 3/3. In terms of biological role, catalyzes the formation of sulfite from phosphoadenosine 5'-phosphosulfate (PAPS) using thioredoxin as an electron donor. In Salmonella heidelberg (strain SL476), this protein is Phosphoadenosine 5'-phosphosulfate reductase.